A 262-amino-acid polypeptide reads, in one-letter code: Phosphatidylglycerol--prolipoprotein diacylglyceryl transferase (262 aa).

The next 4 membrane-spanning stretches (helical) occupy residues 17 to 37, 59 to 79, 94 to 114, and 121 to 141; these read FAIHWYGLMYLMAFVQFLLLG, LLFAGVLGVVLGGRLGYTLFY, IWEGGMSFHGGLLGVLAALYW, and TTFFVVSDLVAPLVPFGLAFG. Arginine 142 is an a 1,2-diacyl-sn-glycero-3-phospho-(1'-sn-glycerol) binding site. 3 consecutive transmembrane segments (helical) span residues 176–196, 201–221, and 231–251; these read QIYQLLGEGVLLGIALWFYAG, VGQVSGFFLLGYGICRFLAEY, and LLGLGLSMGQWLCVPMIFFGI.

The protein belongs to the Lgt family.

It localises to the cell inner membrane. The catalysed reaction is L-cysteinyl-[prolipoprotein] + a 1,2-diacyl-sn-glycero-3-phospho-(1'-sn-glycerol) = an S-1,2-diacyl-sn-glyceryl-L-cysteinyl-[prolipoprotein] + sn-glycerol 1-phosphate + H(+). The protein operates within protein modification; lipoprotein biosynthesis (diacylglyceryl transfer). Its function is as follows. Catalyzes the transfer of the diacylglyceryl group from phosphatidylglycerol to the sulfhydryl group of the N-terminal cysteine of a prolipoprotein, the first step in the formation of mature lipoproteins. This is Phosphatidylglycerol--prolipoprotein diacylglyceryl transferase from Polynucleobacter necessarius subsp. necessarius (strain STIR1).